The primary structure comprises 685 residues: Cilia- and flagella-associated protein 36 (685 aa).

The tract at residues 1–20 (MLRRFSKKNKNPEGGSDDAS) is disordered. Positions 197-242 (SEELEMMAQNSRIQREALEQEIRKEEILLQQALDEGARAQNQNQNQ) form a coiled coil. Residues 287-310 (TGTMTSSTGVSVGTLTNTGVSSGT) show a composition bias toward low complexity. The interval 287–573 (TGTMTSSTGV…LRGNKYDGDV (287 aa)) is disordered. Residues 363–372 (EAEKSKRERP) show a composition bias toward basic and acidic residues. Positions 410-434 (GTTSKKSIATVTASPEMSSKTTQME) are enriched in polar residues. Composition is skewed to basic and acidic residues over residues 439 to 456 (GEGK…ERKY) and 508 to 557 (HEPR…ESKP).

The protein belongs to the CFAP36 family. Expressed in amphid and phasmid ciliated neurons.

The protein localises to the cell projection. Its subcellular location is the cilium. The protein resides in the cytoplasm. It is found in the cytoskeleton. It localises to the cilium axoneme. The protein is Cilia- and flagella-associated protein 36 of Caenorhabditis elegans.